Reading from the N-terminus, the 880-residue chain is Leucine--tRNA ligase (880 aa).

The short motif at proline 46–histidine 56 is the 'HIGH' region element. The 'KMSKS' region motif lies at lysine 638 to serine 642. ATP is bound at residue lysine 641.

This sequence belongs to the class-I aminoacyl-tRNA synthetase family.

Its subcellular location is the cytoplasm. It carries out the reaction tRNA(Leu) + L-leucine + ATP = L-leucyl-tRNA(Leu) + AMP + diphosphate. The sequence is that of Leucine--tRNA ligase from Xanthomonas euvesicatoria pv. vesicatoria (strain 85-10) (Xanthomonas campestris pv. vesicatoria).